Reading from the N-terminus, the 309-residue chain is Manganese ABC transporter substrate-binding lipoprotein PsaA (309 aa).

The first 19 residues, 1–19 (MKKLGTLLVLFLSAIILVA), serve as a signal peptide directing secretion. The N-palmitoyl cysteine moiety is linked to residue cysteine 20. Cysteine 20 is lipidated: S-diacylglycerol cysteine. Residues histidine 67, histidine 139, glutamate 205, and aspartate 280 each contribute to the Mn(2+) site.

The protein belongs to the bacterial solute-binding protein 9 family. Lipoprotein receptor antigen (Lrai) subfamily.

It is found in the cell membrane. Functionally, part of the ATP-binding cassette (ABC) transport system PsaABC involved in manganese import. Binds manganese with high affinity and specificity and delivers it to the membrane permease for translocation into the cytoplasm. Also acts as an adhesin which is involved on adherence to extracellular matrix. It is an important factor in pathogenesis and infection. This Streptococcus pneumoniae serotype 4 (strain ATCC BAA-334 / TIGR4) protein is Manganese ABC transporter substrate-binding lipoprotein PsaA (psaA).